Reading from the N-terminus, the 260-residue chain is Acetylglutamate kinase (260 aa).

Residues 46–47, arginine 68, and asparagine 160 contribute to the substrate site; that span reads GG.

This sequence belongs to the acetylglutamate kinase family. ArgB subfamily.

Its subcellular location is the cytoplasm. The enzyme catalyses N-acetyl-L-glutamate + ATP = N-acetyl-L-glutamyl 5-phosphate + ADP. It functions in the pathway amino-acid biosynthesis; L-arginine biosynthesis; N(2)-acetyl-L-ornithine from L-glutamate: step 2/4. Catalyzes the ATP-dependent phosphorylation of N-acetyl-L-glutamate. The polypeptide is Acetylglutamate kinase (Shewanella denitrificans (strain OS217 / ATCC BAA-1090 / DSM 15013)).